Consider the following 359-residue polypeptide: DNA polymerase IV (359 aa).

The UmuC domain occupies 7 to 188; that stretch reads IIHIDMDAFY…IPIGKFFGVG (182 aa). 2 residues coordinate Mg(2+): D11 and D106. Residue E107 is part of the active site.

Belongs to the DNA polymerase type-Y family. As to quaternary structure, monomer. Requires Mg(2+) as cofactor.

It localises to the cytoplasm. The enzyme catalyses DNA(n) + a 2'-deoxyribonucleoside 5'-triphosphate = DNA(n+1) + diphosphate. Its function is as follows. Poorly processive, error-prone DNA polymerase involved in untargeted mutagenesis. Copies undamaged DNA at stalled replication forks, which arise in vivo from mismatched or misaligned primer ends. These misaligned primers can be extended by PolIV. Exhibits no 3'-5' exonuclease (proofreading) activity. May be involved in translesional synthesis, in conjunction with the beta clamp from PolIII. The chain is DNA polymerase IV from Clostridium perfringens (strain ATCC 13124 / DSM 756 / JCM 1290 / NCIMB 6125 / NCTC 8237 / Type A).